The primary structure comprises 290 residues: 33 kDa chaperonin (290 aa).

2 cysteine pairs are disulfide-bonded: Cys235/Cys237 and Cys268/Cys271.

Belongs to the HSP33 family. In terms of processing, under oxidizing conditions two disulfide bonds are formed involving the reactive cysteines. Under reducing conditions zinc is bound to the reactive cysteines and the protein is inactive.

It localises to the cytoplasm. Redox regulated molecular chaperone. Protects both thermally unfolding and oxidatively damaged proteins from irreversible aggregation. Plays an important role in the bacterial defense system toward oxidative stress. The polypeptide is 33 kDa chaperonin (Streptococcus pyogenes serotype M18 (strain MGAS8232)).